A 65-amino-acid polypeptide reads, in one-letter code: MPKIGPMEILIIVLLVVVVFGIGKLPQVGDAIGKGIRNFRKASSGEEEKEEVETKEETKTIEKSE.

Residues isoleucine 9–glycine 29 form a helical membrane-spanning segment. The disordered stretch occupies residues serine 43–glutamate 65. A compositionally biased stretch (acidic residues) spans glycine 45–threonine 54. The span at lysine 55–glutamate 65 shows a compositional bias: basic and acidic residues.

Belongs to the TatA/E family. In terms of assembly, forms a complex with TatC.

The protein localises to the cell membrane. In terms of biological role, part of the twin-arginine translocation (Tat) system that transports large folded proteins containing a characteristic twin-arginine motif in their signal peptide across membranes. TatA could form the protein-conducting channel of the Tat system. The chain is Sec-independent protein translocase protein TatA from Dehalococcoides mccartyi (strain ATCC BAA-2266 / KCTC 15142 / 195) (Dehalococcoides ethenogenes (strain 195)).